The following is a 598-amino-acid chain: Dihydroxy-acid dehydratase astD, mitochondrial (598 aa).

Residues 1–111 constitute a mitochondrion transit peptide; the sequence is MFASRIRSRA…HRAGLVPMRF (111 aa). The interval 23–50 is disordered; that stretch reads RLPASTTGRRYKSDETLNRVSSKITQPK. Positions 40–50 are enriched in polar residues; it reads NRVSSKITQPK. Cys86 is a [2Fe-2S] cluster binding site. Asp118 lines the Mg(2+) pocket. Position 159 (Cys159) interacts with [2Fe-2S] cluster. Asp160 is a Mg(2+) binding site. A [2Fe-2S] cluster-binding site is contributed by Cys232. Glu485 contacts Mg(2+). The active-site Proton acceptor is Ser511.

Belongs to the IlvD/Edd family. It depends on [2Fe-2S] cluster as a cofactor. Mg(2+) serves as cofactor.

It localises to the mitochondrion. It catalyses the reaction (2R)-2,3-dihydroxy-3-methylbutanoate = 3-methyl-2-oxobutanoate + H2O. The enzyme catalyses (2R,3R)-2,3-dihydroxy-3-methylpentanoate = (S)-3-methyl-2-oxopentanoate + H2O. The protein operates within amino-acid biosynthesis; L-isoleucine biosynthesis; L-isoleucine from 2-oxobutanoate: step 3/4. Its pathway is amino-acid biosynthesis; L-valine biosynthesis; L-valine from pyruvate: step 3/4. DHAD activity is not inhibited by the dihydroxyacid dehydratase inhibitor aspterric acid (AA). Dihydroxyacid dehydratase; part of the gene cluster that mediates the biosynthesis of the sesquiterpenoid aspterric acid (AA), an inhibitor of dihydroxy-acid dehydratase (DHAD) effective as an herbicide. Performs the third step in the common pathway leading to biosynthesis of branched-chain amino acids. Catalyzes the dehydration of (2R,3R)-2,3-dihydroxy-3-methylpentanoate (2,3-dihydroxy-3-methylvalerate) into 2-oxo-3-methylpentanoate (2-oxo-3-methylvalerate) and of (2R)-2,3-dihydroxy-3-methylbutanoate (2,3-dihydroxyisovalerate) into 2-oxo-3-methylbutanoate (2-oxoisovalerate), the penultimate precursor to L-isoleucine and L-valine, respectively. AstD confers self-resistance in the presence of the dihydroxyacid dehydratase inhibitor aspterric acid (AA) produced by the ast cluster. The protein is Dihydroxy-acid dehydratase astD, mitochondrial of Aspergillus terreus (strain NIH 2624 / FGSC A1156).